The following is an 84-amino-acid chain: Small ribosomal subunit protein bS20 (84 aa).

It belongs to the bacterial ribosomal protein bS20 family.

Binds directly to 16S ribosomal RNA. This chain is Small ribosomal subunit protein bS20, found in Ligilactobacillus salivarius (strain UCC118) (Lactobacillus salivarius).